The following is a 411-amino-acid chain: Corticotropin-releasing factor receptor 2 (411 aa).

Positions 1–19 form a signal peptide, not cleaved; that stretch reads MDAALLLSLLEANCSLALA. At 1–108 the chain is on the extracellular side; it reads MDAALLLSLL…EPILDDKQRK (108 aa). 5 N-linked (GlcNAc...) asparagine glycosylation sites follow: Asn13, Asn41, Asn74, Asn86, and Asn94. 3 disulfides stabilise this stretch: Cys14–Cys50, Cys40–Cys83, and Cys64–Cys98. Residues 109-139 form a helical membrane-spanning segment; it reads YDLHYRIALIINYLGHCVSVVALVAAFLLFL. The Cytoplasmic portion of the chain corresponds to 140–146; it reads VLRSIRC. The helical transmembrane segment at 147-171 threads the bilayer; it reads LRNVIHWNLITTFILRNITWFLLQL. The Extracellular portion of the chain corresponds to 172–185; sequence IDHEVHEGNEVWCR. An intrachain disulfide couples Cys184 to Cys254. The helical transmembrane segment at 186–214 threads the bilayer; that stretch reads CVTTIFNYFVVTNFFWMFVEGCYLHTAIV. Over 215-221 the chain is Cytoplasmic; it reads MTYSTEH. Residues 222-249 form a helical membrane-spanning segment; the sequence is LRKWLFLFIGWCIPCPIIVAWAVGKLYY. At 250 to 265 the chain is on the extracellular side; the sequence is ENEQCWFGKEPGDLVD. The helical transmembrane segment at 266-291 threads the bilayer; it reads YIYQGPIILVLLINFVFLFNIVRILM. At 292–302 the chain is on the cytoplasmic side; the sequence is TKLRASTTSET. The chain crosses the membrane as a helical span at residues 303–327; it reads IQYRKAVKATLVLLPLLGITYMLFF. Residues 328 to 334 lie on the Extracellular side of the membrane; that stretch reads VNPGEDD. Residues 335-364 traverse the membrane as a helical segment; sequence LSQIVFIYFNSFLQSFQGFFVSVFYCFFNG. At 365–411 the chain is on the cytoplasmic side; sequence EVRSALRKRWHRWQDHHALRVPVARAMSIPTSPTRISFHSIKQTAAV.

Belongs to the G-protein coupled receptor 2 family. In terms of assembly, monomer. Interacts (via N-terminal extracellular domain) with CRF, UCN, UCN2 and UCN3. An N-glycosylation site within the signal peptide impedes its proper cleavage and function. In terms of tissue distribution, predominantly expressed in limbic regions of the brain such as the lateral septum, the entorhinal cortex, the hypothalamic ventromedial nucleus and several amygdaloid nuclei. Also detectable in lung, kidney and heart.

Its subcellular location is the cell membrane. Its function is as follows. G-protein coupled receptor for CRH (corticotropin-releasing factor), UCN (urocortin), UCN2 and UCN3. Has high affinity for UCN. Ligand binding causes a conformation change that triggers signaling via guanine nucleotide-binding proteins (G proteins) and down-stream effectors, such as adenylate cyclase. Promotes the activation of adenylate cyclase, leading to increased intracellular cAMP levels. The sequence is that of Corticotropin-releasing factor receptor 2 (Crhr2) from Rattus norvegicus (Rat).